The chain runs to 307 residues: Ribonuclease Z (307 aa).

Zn(2+)-binding residues include His63, His65, Asp67, His68, His141, Asp208, and His266. Catalysis depends on Asp67, which acts as the Proton acceptor.

It belongs to the RNase Z family. As to quaternary structure, homodimer. It depends on Zn(2+) as a cofactor.

The catalysed reaction is Endonucleolytic cleavage of RNA, removing extra 3' nucleotides from tRNA precursor, generating 3' termini of tRNAs. A 3'-hydroxy group is left at the tRNA terminus and a 5'-phosphoryl group is left at the trailer molecule.. Zinc phosphodiesterase, which displays some tRNA 3'-processing endonuclease activity. Probably involved in tRNA maturation, by removing a 3'-trailer from precursor tRNA. In Chlamydia pneumoniae (Chlamydophila pneumoniae), this protein is Ribonuclease Z.